Consider the following 285-residue polypeptide: 4-hydroxybenzoate octaprenyltransferase (285 aa).

7 helical membrane passes run 33–53, 93–113, 134–154, 166–186, 209–229, 233–253, and 265–285; these read FLAADGIPDWHVLIVFILGVV, LILFSVLVTCSFILVLTMNTL, ITYLPQFVLGLAFSWAIPMAY, WLLFVINAVWTIAYDTQYAMV, LMIGLLQLTVLTLLIALGIQL, SLYNWGVLAAAGCFVYQQWLI, and FLNNNYVGGFIFVAISASVLI.

It belongs to the UbiA prenyltransferase family. Requires Mg(2+) as cofactor.

Its subcellular location is the cell inner membrane. The enzyme catalyses all-trans-octaprenyl diphosphate + 4-hydroxybenzoate = 4-hydroxy-3-(all-trans-octaprenyl)benzoate + diphosphate. It functions in the pathway cofactor biosynthesis; ubiquinone biosynthesis. Catalyzes the prenylation of para-hydroxybenzoate (PHB) with an all-trans polyprenyl group. Mediates the second step in the final reaction sequence of ubiquinone-8 (UQ-8) biosynthesis, which is the condensation of the polyisoprenoid side chain with PHB, generating the first membrane-bound Q intermediate 3-octaprenyl-4-hydroxybenzoate. The chain is 4-hydroxybenzoate octaprenyltransferase from Aliivibrio salmonicida (strain LFI1238) (Vibrio salmonicida (strain LFI1238)).